The primary structure comprises 272 residues: Shikimate dehydrogenase (NADP(+)) (272 aa).

Shikimate-binding positions include 14–16 (SKS) and threonine 61. Lysine 65 serves as the catalytic Proton acceptor. Glutamate 77 lines the NADP(+) pocket. The shikimate site is built by asparagine 86 and aspartate 102. NADP(+)-binding positions include 126-130 (GAGGA), 149-154 (NRTASR), and methionine 213. Tyrosine 215 serves as a coordination point for shikimate. An NADP(+)-binding site is contributed by glycine 237.

Belongs to the shikimate dehydrogenase family. As to quaternary structure, homodimer.

The catalysed reaction is shikimate + NADP(+) = 3-dehydroshikimate + NADPH + H(+). It participates in metabolic intermediate biosynthesis; chorismate biosynthesis; chorismate from D-erythrose 4-phosphate and phosphoenolpyruvate: step 4/7. In terms of biological role, involved in the biosynthesis of the chorismate, which leads to the biosynthesis of aromatic amino acids. Catalyzes the reversible NADPH linked reduction of 3-dehydroshikimate (DHSA) to yield shikimate (SA). The protein is Shikimate dehydrogenase (NADP(+)) of Salmonella choleraesuis (strain SC-B67).